Reading from the N-terminus, the 199-residue chain is MTKVKICGLSTKEAVETAVSAGADYIGFVFAPSKRQVTLEEAAVLAKLIPADVKKVGVFVSPSRVELLEAIDKVGLDLVQVHGQVADDLFENLPCASIQAVQVDGNGHVPNSQADYLLFDAPVAGSGQPFDWGQLDTTGLAQPFFIAGGLNEDNVVKAIQHFTPYAVDVSSGVETDGQKDHEKIRRFIERVKHGISGTK.

The protein belongs to the TrpF family.

It carries out the reaction N-(5-phospho-beta-D-ribosyl)anthranilate = 1-(2-carboxyphenylamino)-1-deoxy-D-ribulose 5-phosphate. It functions in the pathway amino-acid biosynthesis; L-tryptophan biosynthesis; L-tryptophan from chorismate: step 3/5. The sequence is that of N-(5'-phosphoribosyl)anthranilate isomerase from Streptococcus pneumoniae serotype 19F (strain G54).